The following is a 220-amino-acid chain: Charged multivesicular body protein 2a (220 aa).

Coiled-coil stretches lie at residues 12–53 and 198–219; these read EELL…MAKQ and EATA…NLRR. A disordered region spans residues 196–220; it reads KGEATAALADADADLEERLNNLRRD. An MIT-interacting motif motif is present at residues 208-218; the sequence is ADLEERLNNLR. Positions 211-220 are enriched in basic and acidic residues; the sequence is EERLNNLRRD.

The protein belongs to the SNF7 family. As to quaternary structure, probable core component of the endosomal sorting required for transport complex III (ESCRT-III). ESCRT-III components are thought to multimerize to form a flat lattice on the perimeter membrane of the endosome.

It localises to the late endosome membrane. Its subcellular location is the cytoplasm. In terms of biological role, probable core component of the endosomal sorting required for transport complex III (ESCRT-III) which is involved in multivesicular bodies (MVBs) formation and sorting of endosomal cargo proteins into MVBs. MVBs contain intraluminal vesicles (ILVs) that are generated by invagination and scission from the limiting membrane of the endosome and mostly are delivered to lysosomes enabling degradation of membrane proteins, such as stimulated growth factor receptors, lysosomal enzymes and lipids. The chain is Charged multivesicular body protein 2a (chmp2a) from Xenopus laevis (African clawed frog).